Consider the following 831-residue polypeptide: Zinc phosphodiesterase ELAC protein 2 (831 aa).

The N-terminal 16 residues, 1-16, are a transit peptide targeting the mitochondrion; it reads MWALRSLLRPLGLRTM. 2 disordered regions span residues 15–47 and 179–227; these read TMSQ…PGGP and SERR…ANRK. A compositionally biased stretch (polar residues) spans 186-212; sequence QQPSQSPRTSPNRLSPKQSSDSGSAEN. 5 positions are modified to phosphoserine: S191, S195, S200, S204, and S732. The disordered stretch occupies residues 791 to 831; it reads LTQQADSPEDREPQQKRAHTDEPHSPQSKKESVANTLGARV. T792 bears the Phosphothreonine mark. A phosphoserine mark is found at S797 and S815. Basic and acidic residues predominate over residues 798–822; the sequence is PEDREPQQKRAHTDEPHSPQSKKES.

The protein belongs to the RNase Z family. In terms of assembly, homodimer. Interacts with PTCD1. The cofactor is Zn(2+).

It is found in the mitochondrion. The protein resides in the mitochondrion matrix. Its subcellular location is the mitochondrion nucleoid. It localises to the nucleus. It catalyses the reaction Endonucleolytic cleavage of RNA, removing extra 3' nucleotides from tRNA precursor, generating 3' termini of tRNAs. A 3'-hydroxy group is left at the tRNA terminus and a 5'-phosphoryl group is left at the trailer molecule.. Functionally, zinc phosphodiesterase, which displays mitochondrial tRNA 3'-processing endonuclease activity. Involved in tRNA maturation, by removing a 3'-trailer from precursor tRNA. Associates with mitochondrial DNA complexes at the nucleoids to initiate RNA processing and ribosome assembly. This is Zinc phosphodiesterase ELAC protein 2 (Elac2) from Mus musculus (Mouse).